We begin with the raw amino-acid sequence, 466 residues long: Phosphomethylpyrimidine synthase (466 aa).

Residues N80, M109, Y139, H175, 195–197, 236–239, and E275 contribute to the substrate site; these read SRG and DSLR. Residue H279 coordinates Zn(2+). Y302 contacts substrate. A Zn(2+)-binding site is contributed by H343. Residues C423, C426, and C431 each coordinate [4Fe-4S] cluster.

It belongs to the ThiC family. It depends on [4Fe-4S] cluster as a cofactor.

It carries out the reaction 5-amino-1-(5-phospho-beta-D-ribosyl)imidazole + S-adenosyl-L-methionine = 4-amino-2-methyl-5-(phosphooxymethyl)pyrimidine + CO + 5'-deoxyadenosine + formate + L-methionine + 3 H(+). The protein operates within cofactor biosynthesis; thiamine diphosphate biosynthesis. Catalyzes the synthesis of the hydroxymethylpyrimidine phosphate (HMP-P) moiety of thiamine from aminoimidazole ribotide (AIR) in a radical S-adenosyl-L-methionine (SAM)-dependent reaction. In Prochlorococcus marinus (strain NATL2A), this protein is Phosphomethylpyrimidine synthase.